Here is a 307-residue protein sequence, read N- to C-terminus: Acetyl-coenzyme A carboxylase carboxyl transferase subunit beta (307 aa).

The region spanning 28-297 (LWVKCPDTGQ…TPQPGTAPEP (270 aa)) is the CoA carboxyltransferase N-terminal domain. The segment at 286–307 (RRTPQPGTAPEPTTPEPLPNAA) is disordered. Positions 292–307 (GTAPEPTTPEPLPNAA) are enriched in pro residues.

This sequence belongs to the AccD/PCCB family. As to quaternary structure, acetyl-CoA carboxylase is a heterohexamer composed of biotin carboxyl carrier protein (AccB), biotin carboxylase (AccC) and two subunits each of ACCase subunit alpha (AccA) and ACCase subunit beta (AccD).

Its subcellular location is the cytoplasm. The enzyme catalyses N(6)-carboxybiotinyl-L-lysyl-[protein] + acetyl-CoA = N(6)-biotinyl-L-lysyl-[protein] + malonyl-CoA. The protein operates within lipid metabolism; malonyl-CoA biosynthesis; malonyl-CoA from acetyl-CoA: step 1/1. Component of the acetyl coenzyme A carboxylase (ACC) complex. Biotin carboxylase (BC) catalyzes the carboxylation of biotin on its carrier protein (BCCP) and then the CO(2) group is transferred by the transcarboxylase to acetyl-CoA to form malonyl-CoA. The chain is Acetyl-coenzyme A carboxylase carboxyl transferase subunit beta from Methylorubrum extorquens (strain CM4 / NCIMB 13688) (Methylobacterium extorquens).